The primary structure comprises 303 residues: Protein translocase subunit SecF (303 aa).

6 helical membrane-spanning segments follow: residues Ser-28–Ile-48, Ile-140–Val-160, Trp-164–Phe-184, Leu-194–Ile-214, Ile-246–Ala-266, and Val-272–Ile-292.

The protein belongs to the SecD/SecF family. SecF subfamily. In terms of assembly, forms a complex with SecD. Part of the essential Sec protein translocation apparatus which comprises SecA, SecYEG and auxiliary proteins SecDF-YajC and YidC.

Its subcellular location is the cell inner membrane. Its function is as follows. Part of the Sec protein translocase complex. Interacts with the SecYEG preprotein conducting channel. SecDF uses the proton motive force (PMF) to complete protein translocation after the ATP-dependent function of SecA. The sequence is that of Protein translocase subunit SecF from Rickettsia bellii (strain OSU 85-389).